The following is a 2415-amino-acid chain: Bradyzoite-formation deficient protein 1 (2415 aa).

Disordered regions lie at residues 369–392 (WNKP…PEET), 418–481 (HLTS…PYTR), and 761–845 (DGCG…QDTQ). Positions 419 to 429 (LTSRQHPNPRP) are enriched in basic residues. A compositionally biased stretch (basic and acidic residues) spans 430 to 443 (RMKEEHCGREREVL). 2 stretches are compositionally biased toward polar residues: residues 444–460 (SSEQ…TPAS) and 832–843 (PRTTSSSSYGQD). The 48-residue stretch at 921-968 (WSAEEDASLAELVSRKGFKWALISSQLTGAFGIPRTGKQCRERWFNHV) folds into the Myb-like domain. An HTH myb-type domain is found at 969-1023 (NPEVKKGDWSAEEDAMILMLQNELGNRWATIAKKLRGRTENAVKNRFISLSNARL). Positions 996 to 1019 (WATIAKKLRGRTENAVKNRFISLS) form a DNA-binding region, H-T-H motif. Disordered stretches follow at residues 1027 to 1050 (RPKR…KSSG), 1098 to 1127 (VSRP…LKNT), 1206 to 1270 (NDER…NGLD), 1319 to 1343 (PACD…AQRQ), 1501 to 1521 (QLWT…QQHE), 1905 to 1932 (VSRD…TSQS), 1959 to 2013 (RVRW…GSTA), and 2161 to 2222 (GTDA…EMQD). The span at 1036 to 1050 (DCFSNRRTGSGKSSG) shows a compositional bias: polar residues. Residues 1227-1237 (AHEHADIARSD) are compositionally biased toward basic and acidic residues. Composition is skewed to polar residues over residues 1327–1343 (PQNS…AQRQ) and 1501–1520 (QLWT…NQQH). Polar residues predominate over residues 1974 to 1985 (SVSSGASNSATT). Positions 2181 to 2197 (QAHRRDGHDMQRVQRCD) are enriched in basic and acidic residues.

It localises to the nucleus. Master transcription factor that controls the differentiation of acute-stage tachyzoite parasites into chronic-stage bradyzoites, which form intracellular cysts resistant to immune clearance and existing therapies. Sufficient to drive differentiation into bradyzoite stage. Following translation in response to stress conditions, binds to the promoter of many chronic stage-specific genes and promotes their expression, thereby driving differentiation into bradyzoites. This chain is Bradyzoite-formation deficient protein 1, found in Toxoplasma gondii (strain ATCC 50611 / Me49).